The sequence spans 358 residues: MSQLIATKRVDLLAPYLALDQGSRVQAEYIWIDAEGGIRSKTMTLDKAPSSVADLKEWNFDGSSTNQAPADNSDVFLRPVAIFKDPFRGGANILVLCECYDNDGTPNKSNYRAHCKKVMDAAKDTEPWFGLEQEYTLFDADGQVFGWPKNGFPGPQGPYYCGVGAGKVFARDFIEAHYRACLYAGIKISGINAEVMPSQWEFQVGPCTGIEMGDHLWMARFLLLRIGEEWGITPSLHPKPLKGDWNGAGCHSNYSTKDMRTPGKGMAAIEDAIKKLEKKHLEHIAVYGEDNDLRLTGKHETASMTTFSAGVANRGASIRIPRHVGAQGYGYLEDRRPASNVDPYRVTAILVETTVLNN.

The GS beta-grasp domain maps to 25–104 (VQAEYIWIDA…VLCECYDNDG (80 aa)). The GS catalytic domain maps to 111 to 358 (YRAHCKKVMD…ILVETTVLNN (248 aa)).

Belongs to the glutamine synthetase family. In terms of assembly, homooctamer.

The protein localises to the cytoplasm. The enzyme catalyses L-glutamate + NH4(+) + ATP = L-glutamine + ADP + phosphate + H(+). This chain is Glutamine synthetase (GLN1), found in Cryptococcus neoformans var. neoformans serotype D (strain B-3501A) (Filobasidiella neoformans).